Reading from the N-terminus, the 557-residue chain is 2-succinyl-5-enolpyruvyl-6-hydroxy-3-cyclohexene-1-carboxylate synthase (557 aa).

The protein belongs to the TPP enzyme family. MenD subfamily. Homodimer. Mg(2+) is required as a cofactor. The cofactor is Mn(2+). Thiamine diphosphate serves as cofactor.

It catalyses the reaction isochorismate + 2-oxoglutarate + H(+) = 5-enolpyruvoyl-6-hydroxy-2-succinyl-cyclohex-3-ene-1-carboxylate + CO2. It functions in the pathway quinol/quinone metabolism; 1,4-dihydroxy-2-naphthoate biosynthesis; 1,4-dihydroxy-2-naphthoate from chorismate: step 2/7. Its pathway is quinol/quinone metabolism; menaquinone biosynthesis. Catalyzes the thiamine diphosphate-dependent decarboxylation of 2-oxoglutarate and the subsequent addition of the resulting succinic semialdehyde-thiamine pyrophosphate anion to isochorismate to yield 2-succinyl-5-enolpyruvyl-6-hydroxy-3-cyclohexene-1-carboxylate (SEPHCHC). In Staphylococcus aureus (strain USA300), this protein is 2-succinyl-5-enolpyruvyl-6-hydroxy-3-cyclohexene-1-carboxylate synthase.